The following is a 293-amino-acid chain: Phosphoribosylaminoimidazole-succinocarboxamide synthase (293 aa).

It belongs to the SAICAR synthetase family.

The catalysed reaction is 5-amino-1-(5-phospho-D-ribosyl)imidazole-4-carboxylate + L-aspartate + ATP = (2S)-2-[5-amino-1-(5-phospho-beta-D-ribosyl)imidazole-4-carboxamido]succinate + ADP + phosphate + 2 H(+). Its pathway is purine metabolism; IMP biosynthesis via de novo pathway; 5-amino-1-(5-phospho-D-ribosyl)imidazole-4-carboxamide from 5-amino-1-(5-phospho-D-ribosyl)imidazole-4-carboxylate: step 1/2. This Bordetella petrii (strain ATCC BAA-461 / DSM 12804 / CCUG 43448) protein is Phosphoribosylaminoimidazole-succinocarboxamide synthase.